A 115-amino-acid chain; its full sequence is Large ribosomal subunit protein bL19 (115 aa).

The protein belongs to the bacterial ribosomal protein bL19 family.

This protein is located at the 30S-50S ribosomal subunit interface and may play a role in the structure and function of the aminoacyl-tRNA binding site. This is Large ribosomal subunit protein bL19 from Nitrosococcus oceani (strain ATCC 19707 / BCRC 17464 / JCM 30415 / NCIMB 11848 / C-107).